Here is a 554-residue protein sequence, read N- to C-terminus: uncharacterized protein (554 aa).

The signal sequence occupies residues 1-33 (MKKILIIILFIIIFIVLIYSGLWFVIMFSLSHS).

This is an uncharacterized protein from Rickettsia prowazekii (strain Madrid E).